The chain runs to 710 residues: Probable thimet oligopeptidase (710 aa).

His-502 contacts Zn(2+). Glu-503 is an active-site residue. Zn(2+) is bound at residue His-506.

This sequence belongs to the peptidase M3 family. Zn(2+) is required as a cofactor.

The protein localises to the cytoplasm. It catalyses the reaction Preferential cleavage of bonds with hydrophobic residues at P1, P2 and P3' and a small residue at P1' in substrates of 5 to 15 residues.. Functionally, involved in cytoplasmic peptide degradation. In Arabidopsis thaliana (Mouse-ear cress), this protein is Probable thimet oligopeptidase.